A 740-amino-acid chain; its full sequence is Folic acid synthesis protein fol1 (740 aa).

DHNA stretches follow at residues 39 to 160 (DLIH…REID) and 161 to 280 (DQFF…SCFS). The tract at residues 291–449 (IDNEAVYISL…EKIVDHDIKP (159 aa)) is HPPK. Residues 471 to 730 (TYIMAILNLT…DVYEMYKISK (260 aa)) form the Pterin-binding domain. The DHPS stretch occupies residues 473–740 (IMAILNLTPD…MSDAIWKEIY (268 aa)). Asn478 contacts Mg(2+). (7,8-dihydropterin-6-yl)methyl diphosphate contacts are provided by residues Thr517, Asp552, Asn571, Asp643, Lys683, and 718-720 (RVH).

It in the N-terminal section; belongs to the DHNA family. In the central section; belongs to the HPPK family. This sequence in the C-terminal section; belongs to the DHPS family. It depends on Mg(2+) as a cofactor.

It carries out the reaction 7,8-dihydroneopterin = 6-hydroxymethyl-7,8-dihydropterin + glycolaldehyde. It catalyses the reaction 6-hydroxymethyl-7,8-dihydropterin + ATP = (7,8-dihydropterin-6-yl)methyl diphosphate + AMP + H(+). The catalysed reaction is (7,8-dihydropterin-6-yl)methyl diphosphate + 4-aminobenzoate = 7,8-dihydropteroate + diphosphate. Its pathway is cofactor biosynthesis; tetrahydrofolate biosynthesis; 2-amino-4-hydroxy-6-hydroxymethyl-7,8-dihydropteridine diphosphate from 7,8-dihydroneopterin triphosphate: step 3/4. It functions in the pathway cofactor biosynthesis; tetrahydrofolate biosynthesis; 2-amino-4-hydroxy-6-hydroxymethyl-7,8-dihydropteridine diphosphate from 7,8-dihydroneopterin triphosphate: step 4/4. It participates in cofactor biosynthesis; tetrahydrofolate biosynthesis; 7,8-dihydrofolate from 2-amino-4-hydroxy-6-hydroxymethyl-7,8-dihydropteridine diphosphate and 4-aminobenzoate: step 1/2. In terms of biological role, catalyzes three sequential steps of tetrahydrofolate biosynthesis. The protein is Folic acid synthesis protein fol1 (fol1) of Pneumocystis carinii.